Consider the following 607-residue polypeptide: Elongation factor 4 (607 aa).

One can recognise a tr-type G domain in the interval 11-193; the sequence is SRIRNFSIIA…QVVEKVPAPA (183 aa). Residues 23 to 28 and 140 to 143 each bind GTP; these read DHGKST and NKID.

This sequence belongs to the TRAFAC class translation factor GTPase superfamily. Classic translation factor GTPase family. LepA subfamily.

It localises to the cell membrane. The enzyme catalyses GTP + H2O = GDP + phosphate + H(+). Its function is as follows. Required for accurate and efficient protein synthesis under certain stress conditions. May act as a fidelity factor of the translation reaction, by catalyzing a one-codon backward translocation of tRNAs on improperly translocated ribosomes. Back-translocation proceeds from a post-translocation (POST) complex to a pre-translocation (PRE) complex, thus giving elongation factor G a second chance to translocate the tRNAs correctly. Binds to ribosomes in a GTP-dependent manner. The polypeptide is Elongation factor 4 (Shouchella clausii (strain KSM-K16) (Alkalihalobacillus clausii)).